The following is a 374-amino-acid chain: Alcohol dehydrogenase 1 (374 aa).

Serine 1 carries the N-acetylserine modification. Zn(2+) is bound by residues cysteine 46, histidine 67, cysteine 97, cysteine 100, cysteine 103, cysteine 111, and cysteine 174. Residues 199 to 204 (GLGGVG), aspartate 223, lysine 228, 292 to 294 (VGV), and arginine 369 contribute to the NAD(+) site.

Belongs to the zinc-containing alcohol dehydrogenase family. Class-I subfamily. As to quaternary structure, homodimer. Requires Zn(2+) as cofactor.

It localises to the cytoplasm. The catalysed reaction is a primary alcohol + NAD(+) = an aldehyde + NADH + H(+). It catalyses the reaction a secondary alcohol + NAD(+) = a ketone + NADH + H(+). The polypeptide is Alcohol dehydrogenase 1 (ADH1) (Struthio camelus (Common ostrich)).